Reading from the N-terminus, the 658-residue chain is MPRIAALPDHLVNQIAAGEVVERPANALKEIVENSIDAGATAIDVELDGGGIRLIRVSDNGSGIHPDDIELALHRHATSKIKTLNDLEHVASMGFRGEGLASIASVSRLTLTSRQEDSSHATQVKAEDGKLSSPTAAAHPVGTTIEAAELFFNTPARRKFLKSENTEYAHCATMIERLALAHPHIAFSLKRDGKQVFKLPAQSLHERIAAIVGDDFQTASLEIDSGSGALRLYGAIAKPTFAKGKTDKQYCFVNHRFVRDKVMLHAVKQAYRDVLHNALTPAFVLFLDLPPEAVDVNVHPTKTEIRFRDSRQVHQLVFHTLNKALADTRADLTESVSNAGEVLHDITGVTPAPMPSENDSENLFNRASDYPTGNKPDTRNAFGSSGKTAPMPYQSAYAPQQRSLSLRESRAAMNTYAELYKKTDDIDLELSQFEQARFGNMPSETPAPKTDTPLSDGIPSQSELPPLGFAIAQLLGIYILAQAEDSLLLIDMHAAAERVNYEKMKRQRQENGRLQSQRLLIPITFAASHEECAALADYAETLAGFGLELSDMGGNTLAVRAVPTMLGKADVVSLARDVLGELAQVGSSQTIEEHENHILATMSCHGSVRAGRQLTLPEMNALLRDMENTPRSNQCNHGRPTWVKLTLKELDALFLRGQ.

A compositionally biased stretch (basic and acidic residues) spans 114 to 130 (RQEDSSHATQVKAEDGK). 3 disordered regions span residues 114–137 (RQED…PTAA), 369–401 (DYPT…APQQ), and 438–457 (FGNM…LSDG).

It belongs to the DNA mismatch repair MutL/HexB family.

This protein is involved in the repair of mismatches in DNA. It is required for dam-dependent methyl-directed DNA mismatch repair. May act as a 'molecular matchmaker', a protein that promotes the formation of a stable complex between two or more DNA-binding proteins in an ATP-dependent manner without itself being part of a final effector complex. The protein is DNA mismatch repair protein MutL of Neisseria meningitidis serogroup A / serotype 4A (strain DSM 15465 / Z2491).